Reading from the N-terminus, the 994-residue chain is Sarcoplasmic/endoplasmic reticulum calcium ATPase 1 (994 aa).

Over 1-48 (MEQAHTKTTEECLAYFGVNENTGLSLDQVKKNFDKFGPNELPAEEGKS) the chain is Cytoplasmic. Residues 49-69 (LWELVAEQFEDLLVRILLLAA) form a helical membrane-spanning segment. Residues 70 to 89 (IISFVLAWFEEGEETVTAFV) are Lumenal-facing. A helical membrane pass occupies residues 90-110 (EPFVILLILIANAVVGVWQER). Residues 111 to 253 (NAEDAIEALK…QEKTPLQQKL (143 aa)) lie on the Cytoplasmic side of the membrane. A helical transmembrane segment spans residues 254–273 (DEFGEQLSKVISLICVAVWL). Residues 274 to 295 (INIGHFNDPIHGGSWIKGAIYY) are Lumenal-facing. A helical membrane pass occupies residues 296–313 (FKIAVALAVAAIPEGLPA). Positions 304, 305, 307, and 309 each coordinate Ca(2+). The Cytoplasmic portion of the chain corresponds to 314-757 (VITTCLALGT…EEGRAIYNNM (444 aa)). Asp-351 serves as the catalytic 4-aspartylphosphate intermediate. Mg(2+) contacts are provided by Asp-351 and Thr-353. ATP contacts are provided by Thr-353, Glu-442, Arg-489, Lys-515, Arg-560, Thr-625, Gly-626, Asp-627, Arg-678, and Lys-684. Mg(2+) is bound at residue Asp-703. Residue Asn-706 coordinates ATP. Residues 758–777 (KQFIRYLISSNVGEVVCIFL) form a helical membrane-spanning segment. Residues Asn-768 and Glu-771 each coordinate Ca(2+). Residues 778–787 (TAALGLPEAL) lie on the Lumenal side of the membrane. Residues 788 to 808 (IPVQLLWVNLVTDGLPATALG) traverse the membrane as a helical segment. Residues 788-808 (IPVQLLWVNLVTDGLPATALG) form an interaction with PLN region. Asn-796, Thr-799, and Asp-800 together coordinate Ca(2+). Residues 809 to 828 (FNPPDLDIMDRPPRSPKEPL) lie on the Cytoplasmic side of the membrane. Residues 829–851 (ISGWLFFRYMAIGGYVGAATVGA) form a helical membrane-spanning segment. Over 852–897 (AAWWFMYADDGPNVTFYQLSHFMQCTEDNPDFEGHECEIFESPVPM) the chain is Lumenal. Cys-876 and Cys-888 form a disulfide bridge. A helical membrane pass occupies residues 898–917 (TMALSVLVTIEMCNALNSLS). Glu-908 is a Ca(2+) binding site. Over 918–930 (ENQSLIRMPPWSN) the chain is Cytoplasmic. A helical membrane pass occupies residues 931–949 (FWLLGSICLSMSLHFLILY). The segment at 932–943 (WLLGSICLSMSL) is interaction with PLN. At 950–964 (VEPLPMIFKLTPLNV) the chain is on the lumenal side. The chain crosses the membrane as a helical span at residues 965–985 (EQWFIVLKMSFPVILLDELLK). Over 986–994 (FVARNYLEG) the chain is Cytoplasmic.

This sequence belongs to the cation transport ATPase (P-type) (TC 3.A.3) family. Type IIA subfamily. As to quaternary structure, interacts with sarcolipin (SLN). Interacts with phospholamban (PLN). Interacts with myoregulin (MRLN). Interacts with DWORF. Interacts with VMP1. The cofactor is Mg(2+).

The protein localises to the endoplasmic reticulum membrane. Its subcellular location is the sarcoplasmic reticulum membrane. The catalysed reaction is Ca(2+)(in) + ATP + H2O = Ca(2+)(out) + ADP + phosphate + H(+). With respect to regulation, inhibited by sarcolipin (SLN) and myoregulin (MRLN). Also shown to be inhibited by phospholamban (PLN) in vitro. Enhanced by DWORF; DWORF increases activity by displacing sarcolipin (SLN), phospholamban (PLN) and myoregulin (MRLN). Functionally, key regulator of striated muscle performance by acting as the major Ca(2+) ATPase responsible for the reuptake of cytosolic Ca(2+) into the sarcoplasmic reticulum. Catalyzes the hydrolysis of ATP coupled with the translocation of calcium from the cytosol to the sarcoplasmic reticulum lumen. Contributes to calcium sequestration involved in muscular excitation/contraction. The sequence is that of Sarcoplasmic/endoplasmic reticulum calcium ATPase 1 (ATP2A1) from Pelophylax lessonae (Pool frog).